The sequence spans 278 residues: Dermonecrotic toxin LspiSicTox-betaIE2iii (278 aa).

Residue histidine 5 is part of the active site. Mg(2+) contacts are provided by glutamate 25 and aspartate 27. Catalysis depends on histidine 41, which acts as the Nucleophile. Disulfide bonds link cysteine 45–cysteine 51 and cysteine 47–cysteine 190. Aspartate 85 lines the Mg(2+) pocket.

It belongs to the arthropod phospholipase D family. Class II subfamily. It depends on Mg(2+) as a cofactor. As to expression, expressed by the venom gland.

The protein localises to the secreted. It catalyses the reaction an N-(acyl)-sphingosylphosphocholine = an N-(acyl)-sphingosyl-1,3-cyclic phosphate + choline. It carries out the reaction an N-(acyl)-sphingosylphosphoethanolamine = an N-(acyl)-sphingosyl-1,3-cyclic phosphate + ethanolamine. The catalysed reaction is a 1-acyl-sn-glycero-3-phosphocholine = a 1-acyl-sn-glycero-2,3-cyclic phosphate + choline. The enzyme catalyses a 1-acyl-sn-glycero-3-phosphoethanolamine = a 1-acyl-sn-glycero-2,3-cyclic phosphate + ethanolamine. Dermonecrotic toxins cleave the phosphodiester linkage between the phosphate and headgroup of certain phospholipids (sphingolipid and lysolipid substrates), forming an alcohol (often choline) and a cyclic phosphate. This toxin acts on sphingomyelin (SM). It may also act on ceramide phosphoethanolamine (CPE), lysophosphatidylcholine (LPC) and lysophosphatidylethanolamine (LPE), but not on lysophosphatidylserine (LPS), and lysophosphatidylglycerol (LPG). It acts by transphosphatidylation, releasing exclusively cyclic phosphate products as second products. Induces dermonecrosis, hemolysis, increased vascular permeability, edema, inflammatory response, and platelet aggregation. The sequence is that of Dermonecrotic toxin LspiSicTox-betaIE2iii from Loxosceles spinulosa (Recluse spider).